The chain runs to 39 residues: Photosystem II reaction center protein J (39 aa).

A helical transmembrane segment spans residues 7-27; that stretch reads IPLWIVATVAGTGVLVVVGLF.

The protein belongs to the PsbJ family. As to quaternary structure, PSII is composed of 1 copy each of membrane proteins PsbA, PsbB, PsbC, PsbD, PsbE, PsbF, PsbH, PsbI, PsbJ, PsbK, PsbL, PsbM, PsbT, PsbX, PsbY, PsbZ, Psb30/Ycf12, peripheral proteins PsbO, CyanoQ (PsbQ), PsbU, PsbV and a large number of cofactors. It forms dimeric complexes.

It localises to the cellular thylakoid membrane. In terms of biological role, one of the components of the core complex of photosystem II (PSII). PSII is a light-driven water:plastoquinone oxidoreductase that uses light energy to abstract electrons from H(2)O, generating O(2) and a proton gradient subsequently used for ATP formation. It consists of a core antenna complex that captures photons, and an electron transfer chain that converts photonic excitation into a charge separation. This is Photosystem II reaction center protein J from Synechococcus elongatus (strain ATCC 33912 / PCC 7942 / FACHB-805) (Anacystis nidulans R2).